The following is a 907-amino-acid chain: Polyphosphoinositide phosphatase (907 aa).

The SAC domain occupies 154–547 (FQNVDLSSNF…GDTLSLQYGG (394 aa)). Positions 707 to 788 (GIDPSPFTVR…VKMTDAGDSA (82 aa)) are disordered. Acidic residues predominate over residues 758 to 770 (SEDDSGTDREEEG).

As to quaternary structure, component of the PI(3,5)P2 regulatory complex/PAS complex, at least composed of PIKFYVE, FIG4 and VAC14. VAC14 nucleates the assembly of the complex and serves as a scaffold by pentamerizing into a star-shaped structure, which can bind a single copy each of PIKFYVE and FIG4 and coordinates their activities.

The protein resides in the endosome membrane. It catalyses the reaction a 1,2-diacyl-sn-glycero-3-phospho-(1D-myo-inositol-3,5-bisphosphate) + H2O = a 1,2-diacyl-sn-glycero-3-phospho-(1D-myo-inositol-3-phosphate) + phosphate. The catalysed reaction is a 1,2-diacyl-sn-glycero-3-phospho-(1D-myo-inositol-4,5-bisphosphate) + H2O = a 1,2-diacyl-sn-glycero-3-phospho-(1D-myo-inositol 4-phosphate) + phosphate. The enzyme catalyses a 1,2-diacyl-sn-glycero-3-phospho-(1D-myo-inositol-3,4,5-trisphosphate) + H2O = a 1,2-diacyl-sn-glycero-3-phospho-(1D-myo-inositol-3,4-bisphosphate) + phosphate. It carries out the reaction O-phospho-L-seryl-[protein] + H2O = L-seryl-[protein] + phosphate. In terms of biological role, dual specificity phosphatase component of the PI(3,5)P2 regulatory complex which regulates both the synthesis and turnover of phosphatidylinositol 3,5-bisphosphate (PtdIns(3,5)P2). Catalyzes the dephosphorylation of phosphatidylinositol 3,5-bisphosphate (PtdIns(3,5)P2) to form phosphatidylinositol 3-phosphate. Has serine-protein phosphatase activity acting on PIKfyve to stimulate its lipid kinase activity, its catalytically activity being required for maximal PI(3,5)P2 production. In vitro, hydrolyzes all three D5-phosphorylated polyphosphoinositide and although displaying preferences for PtdIns(3,5)P2, it is capable of hydrolyzing PtdIns(3,4,5)P3 and PtdIns(4,5)P2, at least in vitro. The polypeptide is Polyphosphoinositide phosphatase (Homo sapiens (Human)).